The chain runs to 647 residues: UvrABC system protein C (647 aa).

The 80-residue stretch at 16–95 (VEPGVYRFRD…IKEFDPRFNV (80 aa)) folds into the GIY-YIG domain. In terms of domain architecture, UVR spans 208–243 (DRFARELEQQMNAAAAELDFERAARLRDDLGALKRA).

Belongs to the UvrC family. In terms of assembly, interacts with UvrB in an incision complex.

Its subcellular location is the cytoplasm. The UvrABC repair system catalyzes the recognition and processing of DNA lesions. UvrC both incises the 5' and 3' sides of the lesion. The N-terminal half is responsible for the 3' incision and the C-terminal half is responsible for the 5' incision. The polypeptide is UvrABC system protein C (Mycolicibacterium paratuberculosis (strain ATCC BAA-968 / K-10) (Mycobacterium paratuberculosis)).